Consider the following 412-residue polypeptide: Alpha-1-antiproteinase (412 aa).

The signal sequence occupies residues 1–24 (MPSSISWGLLLLAGLCCLAPGSLA). A Phosphoserine modification is found at S33. 4 N-linked (GlcNAc...) asparagine glycosylation sites follow: N65, N102, N165, and N266. Positions 368–387 (GVTVLEAIPMSLPPDVRFDR) are RCL. Position 378 is a phosphoserine (S378).

This sequence belongs to the serpin family. As to quaternary structure, interacts with CELA2A. Interacts with ERGIC3 and LMAN1/ERGIC53. Interacts with PRSS1/Trypsin. As to expression, plasma.

It is found in the secreted. Inhibitor of serine proteases. The chain is Alpha-1-antiproteinase from Callosciurus caniceps (Gray-bellied squirrel).